The following is a 122-amino-acid chain: Small ribosomal subunit protein uS13 (122 aa).

Residues Pro97–Lys122 form a disordered region.

Belongs to the universal ribosomal protein uS13 family. In terms of assembly, part of the 30S ribosomal subunit. Forms a loose heterodimer with protein S19. Forms two bridges to the 50S subunit in the 70S ribosome.

Its function is as follows. Located at the top of the head of the 30S subunit, it contacts several helices of the 16S rRNA. In the 70S ribosome it contacts the 23S rRNA (bridge B1a) and protein L5 of the 50S subunit (bridge B1b), connecting the 2 subunits; these bridges are implicated in subunit movement. Contacts the tRNAs in the A and P-sites. The protein is Small ribosomal subunit protein uS13 of Brucella anthropi (strain ATCC 49188 / DSM 6882 / CCUG 24695 / JCM 21032 / LMG 3331 / NBRC 15819 / NCTC 12168 / Alc 37) (Ochrobactrum anthropi).